The following is a 37-amino-acid chain: Large ribosomal subunit protein bL36A (37 aa).

This sequence belongs to the bacterial ribosomal protein bL36 family.

The sequence is that of Large ribosomal subunit protein bL36A from Methylobacillus flagellatus (strain ATCC 51484 / DSM 6875 / VKM B-1610 / KT).